The sequence spans 220 residues: Iron-sulfur cluster repair protein YtfE (220 aa).

This sequence belongs to the RIC family. YtfE subfamily. As to quaternary structure, homodimer.

The protein localises to the cytoplasm. In terms of biological role, di-iron-containing protein involved in the repair of iron-sulfur clusters damaged by oxidative and nitrosative stress conditions. The chain is Iron-sulfur cluster repair protein YtfE from Enterobacter sp. (strain 638).